The following is a 1823-amino-acid chain: Laminin subunit alpha-4 (1823 aa).

An N-terminal signal peptide occupies residues 1-24; sequence MALSSAWRSVLPLWLLWSAACSRA. A glycan (O-linked (Xyl...) (chondroitin sulfate) serine) is linked at Ser-39. Disulfide bonds link Cys-82/Cys-91, Cys-84/Cys-98, Cys-101/Cys-110, Cys-113/Cys-129, Cys-132/Cys-146, Cys-134/Cys-155, Cys-157/Cys-166, Cys-169/Cys-184, Cys-187/Cys-202, Cys-189/Cys-209, Cys-212/Cys-221, and Cys-224/Cys-238. Laminin EGF-like domains follow at residues 82-131, 132-186, and 187-240; these read CDCN…FCQP, CPCP…TCKK, and CDCS…NCAV. A glycan (N-linked (GlcNAc...) asparagine) is linked at Asn-104. N-linked (GlcNAc...) asparagine glycosylation occurs at Asn-215. The 15-residue stretch at 241 to 255 folds into the Laminin EGF-like 4; truncated domain; that stretch reads CNCGGGPCDSVTGEC. Residues 256–832 are domain II and I; that stretch reads LEEGFEPPTG…AQTRSVASKI (577 aa). Residue Asn-315 is glycosylated (N-linked (GlcNAc...) asparagine). A coiled-coil region spans residues 320–403; that stretch reads LLKTKLSERE…KIQEINNKML (84 aa). Residue Asn-465 is glycosylated (N-linked (GlcNAc...) asparagine). Residues 473 to 528 adopt a coiled-coil conformation; it reads VVLEQLDDYNAKLSDLQEALDQALNYVRDAEDMNRATAARQRDHEKQQERVREQME. 6 N-linked (GlcNAc...) asparagine glycosylation sites follow: Asn-531, Asn-557, Asn-578, Asn-581, Asn-638, and Asn-646. A coiled-coil region spans residues 581 to 614; it reads NLSHDLVQEAIDHAQDLQQEANELSRKLHSSDMN. Residues 662 to 724 adopt a coiled-coil conformation; it reads IIYHKDESEN…AVKQLQAAER (63 aa). Positions 724 to 726 match the Cell attachment site motif; sequence RGD. N-linked (GlcNAc...) asparagine glycans are attached at residues Asn-742, Asn-758, Asn-761, Asn-787, and Asn-810. Residues 777–806 are a coiled coil; sequence AVNSARDAVRNLTEVVPQLLDQLRTVEQKR. Laminin G-like domains follow at residues 833 to 1035, 1047 to 1227, and 1234 to 1402; these read QVSM…SVPC, AASY…GYGC, and SRRA…LYEC. The cysteines at positions 1005 and 1035 are disulfide-linked. A glycan (N-linked (GlcNAc...) asparagine) is linked at Asn-1093. A disulfide bond links Cys-1201 and Cys-1227. 2 N-linked (GlcNAc...) asparagine glycosylation sites follow: Asn-1288 and Asn-1366. A disulfide bridge connects residues Cys-1370 and Cys-1402. An N-linked (GlcNAc...) asparagine glycan is attached at Asn-1418. The disordered stretch occupies residues 1419–1440; that stretch reads LSKPKASQNKKGGKSKDAPSWD. Laminin G-like domains lie at 1469–1640 and 1647–1820; these read AYQY…VTPC and TGTY…INSC. Intrachain disulfides connect Cys-1617/Cys-1640 and Cys-1792/Cys-1820.

As to quaternary structure, laminin is a complex glycoprotein, consisting of three different polypeptide chains (alpha, beta, gamma), which are bound to each other by disulfide bonds into a cross-shaped molecule comprising one long and three short arms with globules at each end. Alpha-4 is a subunit of laminin-8 (laminin-411), laminin-9 (laminin-421) and laminin-14 (laminin-423). Detected in placenta (at protein level). Detected in fibroblasts and urine (at protein level). In adult, strong expression in heart, lung, ovary small and large intestines, placenta, liver; weak or no expression in skeletal muscle, kidney, pancreas, testis, prostate, brain. High expression in fetal lung and kidney. Expression in fetal and newborn tissues is observed in certain mesenchymal cells in tissues such as smooth muscle and dermis.

It localises to the secreted. The protein localises to the extracellular space. Its subcellular location is the extracellular matrix. The protein resides in the basement membrane. Binding to cells via a high affinity receptor, laminin is thought to mediate the attachment, migration and organization of cells into tissues during embryonic development by interacting with other extracellular matrix components. The protein is Laminin subunit alpha-4 (LAMA4) of Homo sapiens (Human).